The primary structure comprises 837 residues: Phosphatidylinositol-glycan-specific phospholipase D (837 aa).

The signal sequence occupies residues 1–23 (MSAGRLWSSLLLLLPLFCSKSSS). 5 N-linked (GlcNAc...) asparagine glycosylation sites follow: N94, N267, N287, N303, and N317. 7 FG-GAP repeats span residues 364 to 425 (SPSA…GLPP), 431 to 492 (NKEG…GRLS), 494 to 554 (SPNV…RNDK), 561 to 619 (EADW…SLGK), 629 to 689 (QSTI…GATR), 701 to 767 (ALLS…TLGD), and 785 to 837 (QYVL…FSSD). 5 N-linked (GlcNAc...) asparagine glycosylation sites follow: N477, N496, N586, N599, and N655.

Belongs to the GPLD1 family. Monomer. Widely expressed.

The protein localises to the secreted. The enzyme catalyses a 6-(alpha-D-glucosaminyl)-1-(1,2-diacyl-sn-glycero-3-phospho)-1D-myo-inositol + H2O = 6-(alpha-D-glucosaminyl)-1D-myo-inositol + a 1,2-diacyl-sn-glycero-3-phosphate + H(+). Its function is as follows. This protein hydrolyzes the inositol phosphate linkage in proteins anchored by phosphatidylinositol glycans (GPI-anchor) thus releasing these proteins from the membrane. The chain is Phosphatidylinositol-glycan-specific phospholipase D (Gpld1) from Mus musculus (Mouse).